The sequence spans 282 residues: Kanosamine-6-phosphate phosphatase (282 aa).

Aspartate 25 serves as the catalytic Nucleophile. Residues aspartate 25 and aspartate 27 each contribute to the Mg(2+) site. Lysine 209 serves as a coordination point for phosphate. Residues aspartate 232 and serine 233 each coordinate Mg(2+). Asparagine 235 is a phosphate binding site.

It belongs to the HAD-like hydrolase superfamily. Cof family. In terms of assembly, homotetramer. Requires Mg(2+) as cofactor.

It catalyses the reaction D-kanosamine 6-phosphate + H2O = kanosamine + phosphate. It participates in antibiotic biosynthesis; kanosamine biosynthesis. Its function is as follows. Involved in the biosynthesis of kanosamine (3-amino-3-deoxy-D-glucose), which is known to have antibiotic and antifungal properties, and to be a precursor of the antibiotic neotrehalosadiamine (3,3'-diamino-3,3'-dideoxy-alpha,beta-trehalose (NTD)). Catalyzes the dephosphorylation of kanosamine 6-phosphate to yield kanosamine. There is a trace amount of activity using glucosamine-6-phosphate. This chain is Kanosamine-6-phosphate phosphatase (ntdB), found in Bacillus subtilis (strain 168).